The primary structure comprises 84 residues: Large ribosomal subunit protein bL27 (84 aa).

The interval 1-22 (MAHKKGASSTRNGRDSNAQRLG) is disordered. The span at 7–19 (ASSTRNGRDSNAQ) shows a compositional bias: polar residues.

The protein belongs to the bacterial ribosomal protein bL27 family.

In Streptomyces avermitilis (strain ATCC 31267 / DSM 46492 / JCM 5070 / NBRC 14893 / NCIMB 12804 / NRRL 8165 / MA-4680), this protein is Large ribosomal subunit protein bL27.